Reading from the N-terminus, the 52-residue chain is TVDCSDYPKPVCTLEEMPLCGSDNKTYGNKCNFCNAVVDSNGTLTLSHFGKC.

The Kazal-like domain occupies 2-52 (VDCSDYPKPVCTLEEMPLCGSDNKTYGNKCNFCNAVVDSNGTLTLSHFGKC). 3 disulfides stabilise this stretch: Cys4-Cys34, Cys12-Cys31, and Cys20-Cys52. Asn41 carries an N-linked (GlcNAc...) asparagine glycan.

It localises to the secreted. This chain is Ovomucoid, found in Scythrops novaehollandiae (Channel-billed cuckoo).